The chain runs to 571 residues: Hemagglutinin-neuraminidase (571 aa).

Residues 1–26 lie on the Intravirion side of the membrane; that stretch reads MDRAVNRVVLENEEREAKNTWRLVFR. Residues 27-47 form a helical membrane-spanning segment; it reads IAVLLLMVMTLAISAAALVYS. Topologically, residues 48–571 are virion surface; the sequence is MGASTPRDLA…LVEILKDDRV (524 aa). An N-linked (GlcNAc...) asparagine; by host glycan is attached at Asn-119. An important for interaction with fusion/F protein region spans residues 124-152; the sequence is GEPVHDPDYIGGIGKELIVDDISDVTSFY. Intrachain disulfides connect Cys-172–Cys-196, Cys-186–Cys-247, and Cys-238–Cys-251. The involved in neuraminidase activity stretch occupies residues 234–239; sequence NRKSCS. N-linked (GlcNAc...) asparagine; by host glycosylation is found at Asn-341 and Asn-433. 2 disulfide bridges follow: Cys-344/Cys-461 and Cys-455/Cys-465. N-linked (GlcNAc...) asparagine; by host glycosylation is found at Asn-481, Asn-508, and Asn-538. The cysteines at positions 531 and 542 are disulfide-linked.

Belongs to the paramyxoviruses hemagglutinin-neuraminidase family. As to quaternary structure, homotetramer; composed of disulfide-linked homodimers. Interacts with F protein trimer. Interacts with host CG-1B; this interaction inhibits viral adsorption and replication rather than internalization.

It is found in the virion membrane. The protein localises to the host cell membrane. The catalysed reaction is Hydrolysis of alpha-(2-&gt;3)-, alpha-(2-&gt;6)-, alpha-(2-&gt;8)- glycosidic linkages of terminal sialic acid residues in oligosaccharides, glycoproteins, glycolipids, colominic acid and synthetic substrates.. Functionally, mediates the viral entry into the host cell together with fusion/F protein. Attaches the virus to sialic acid-containing cell receptors and thereby initiates infection. Binding of HN protein to the receptor induces a conformational change that allows the F protein to trigger virion/cell membranes fusion. In terms of biological role, neuraminidase activity ensures the efficient spread of the virus by dissociating the mature virions from the neuraminic acid containing glycoproteins. The polypeptide is Hemagglutinin-neuraminidase (HN) (Gallus gallus (Chicken)).